Here is a 406-residue protein sequence, read N- to C-terminus: UPF0761 membrane protein NMB0524 (406 aa).

6 helical membrane-spanning segments follow: residues 43-63 (LLAL…FPVF), 100-120 (LTAI…RTID), 139-159 (FLVY…GISF), 176-196 (WSGA…LWGL), 210-230 (AFVG…LFTW), and 248-268 (VPFF…GAVL).

Belongs to the UPF0761 family.

It localises to the cell inner membrane. This is UPF0761 membrane protein NMB0524 from Neisseria meningitidis serogroup B (strain ATCC BAA-335 / MC58).